The chain runs to 281 residues: 2-dehydro-3-deoxyphosphooctonate aldolase (281 aa).

The protein belongs to the KdsA family.

The protein localises to the cytoplasm. It carries out the reaction D-arabinose 5-phosphate + phosphoenolpyruvate + H2O = 3-deoxy-alpha-D-manno-2-octulosonate-8-phosphate + phosphate. It functions in the pathway carbohydrate biosynthesis; 3-deoxy-D-manno-octulosonate biosynthesis; 3-deoxy-D-manno-octulosonate from D-ribulose 5-phosphate: step 2/3. The protein operates within bacterial outer membrane biogenesis; lipopolysaccharide biosynthesis. The protein is 2-dehydro-3-deoxyphosphooctonate aldolase of Pseudomonas syringae pv. syringae (strain B728a).